We begin with the raw amino-acid sequence, 255 residues long: Acetylglutamate kinase (255 aa).

Residues 40 to 41 (GG), Arg-62, and Asn-153 contribute to the substrate site.

The protein belongs to the acetylglutamate kinase family. ArgB subfamily.

Its subcellular location is the cytoplasm. The enzyme catalyses N-acetyl-L-glutamate + ATP = N-acetyl-L-glutamyl 5-phosphate + ADP. The protein operates within amino-acid biosynthesis; L-arginine biosynthesis; N(2)-acetyl-L-ornithine from L-glutamate: step 2/4. Functionally, catalyzes the ATP-dependent phosphorylation of N-acetyl-L-glutamate. In Bacillus thuringiensis (strain Al Hakam), this protein is Acetylglutamate kinase.